An 852-amino-acid polypeptide reads, in one-letter code: Leucine--tRNA ligase (852 aa).

The short motif at 51-61 (PYPSGDLHMGH) is the 'HIGH' region element. Residues 615–619 (KMSKS) carry the 'KMSKS' region motif. An ATP-binding site is contributed by lysine 618.

It belongs to the class-I aminoacyl-tRNA synthetase family.

It localises to the cytoplasm. It carries out the reaction tRNA(Leu) + L-leucine + ATP = L-leucyl-tRNA(Leu) + AMP + diphosphate. This is Leucine--tRNA ligase from Clavibacter sepedonicus (Clavibacter michiganensis subsp. sepedonicus).